Consider the following 294-residue polypeptide: Large ribosomal subunit protein uL18A (294 aa).

Residue Ser-10 is modified to Phosphoserine. Tyr-12 bears the Phosphotyrosine mark. Position 81 is a phosphoserine (Ser-81).

The protein belongs to the universal ribosomal protein uL18 family. In terms of assembly, component of the large ribosomal subunit (LSU). Mature yeast ribosomes consist of a small (40S) and a large (60S) subunit. The 40S small subunit contains 1 molecule of ribosomal RNA (18S rRNA) and 33 different proteins (encoded by 57 genes). The large 60S subunit contains 3 rRNA molecules (25S, 5.8S and 5S rRNA) and 46 different proteins (encoded by 81 genes). Component of a hexameric 5S RNP precursor complex, composed of 5S RNA, rrs1, rpf2, rpl5a/rpl5b, rpl11a/rpl11b and syo1; this complex acts as a precursor for ribosome assembly. rpl5a/rpl5b/uL18 forms a heterotrimeric complex with syo1 and rpl11a/rpl11b/uL5. Interaction of this complex with KAP104 allows the nuclear import of the heterotrimer.

Its subcellular location is the cytoplasm. It localises to the nucleus. Its function is as follows. Component of the ribosome, a large ribonucleoprotein complex responsible for the synthesis of proteins in the cell. The small ribosomal subunit (SSU) binds messenger RNAs (mRNAs) and translates the encoded message by selecting cognate aminoacyl-transfer RNA (tRNA) molecules. The large subunit (LSU) contains the ribosomal catalytic site termed the peptidyl transferase center (PTC), which catalyzes the formation of peptide bonds, thereby polymerizing the amino acids delivered by tRNAs into a polypeptide chain. The nascent polypeptides leave the ribosome through a tunnel in the LSU and interact with protein factors that function in enzymatic processing, targeting, and the membrane insertion of nascent chains at the exit of the ribosomal tunnel. The chain is Large ribosomal subunit protein uL18A (rpl501) from Schizosaccharomyces pombe (strain 972 / ATCC 24843) (Fission yeast).